The chain runs to 375 residues: Mitochondrial phosphate carrier protein 3, mitochondrial (375 aa).

Residues 76 to 96 (AFYAACTFGGILSCGLTHMTV) traverse the membrane as a helical segment. Solcar repeat units follow at residues 76 to 160 (AFYA…FKKT), 173 to 257 (YKTL…IVEM), and 274 to 353 (LQLG…FKVF). Residues 97 to 134 (TPLDLVKCNMQIDPAKYKSISSGFGILLKEQGVKGFFR) are Mitochondrial matrix-facing. The chain crosses the membrane as a helical span at residues 135–154 (GWVPTLLGYSAQGACKFGFY). The Mitochondrial intermembrane segment spans residues 155-175 (EYFKKTYSDLAGPEYTAKYKT). Residues 176–196 (LIYLAGSASAEIIADIALCPF) traverse the membrane as a helical segment. The Mitochondrial matrix portion of the chain corresponds to 197 to 231 (EAVKVRVQTQPGFARGMSDGFPKFIKSEGYGGLYK). The helical transmembrane segment at 232–251 (GLAPLWGRQIPYTMMKFASF) threads the bilayer. Over 252 to 272 (ETIVEMIYKYAIPNPKSECSK) the chain is Mitochondrial intermembrane. The chain crosses the membrane as a helical span at residues 273 to 293 (GLQLGVSFAGGYVAGVFCAIV). Over 294–332 (SHPADNLVSFLNNAKGATVGDAVKKIGMVGLFTRGLPLR) the chain is Mitochondrial matrix. Residues 333 to 353 (IVMIGTLTGAQWGLYDAFKVF) form a helical membrane-spanning segment. The Mitochondrial intermembrane segment spans residues 354-375 (VGLPTTGGVAPAPAIAATEAKA).

Belongs to the mitochondrial carrier (TC 2.A.29) family. Expressed in stems, leaves and flowers. Strong expression in vascular tissues.

Its subcellular location is the mitochondrion inner membrane. Its function is as follows. Transport of phosphate groups from the cytosol to the mitochondrial matrix. Mediates salt stress tolerance through an ATP-dependent pathway and via modulation of the gibberellin metabolism. This is Mitochondrial phosphate carrier protein 3, mitochondrial (MPT3) from Arabidopsis thaliana (Mouse-ear cress).